A 236-amino-acid chain; its full sequence is 7-cyano-7-deazaguanine synthase (236 aa).

7-17 provides a ligand contact to ATP; it reads CSGGLDSVSLA. Zn(2+)-binding residues include Cys-185, Cys-193, Cys-196, and Cys-199.

The protein belongs to the QueC family. The cofactor is Zn(2+).

It catalyses the reaction 7-carboxy-7-deazaguanine + NH4(+) + ATP = 7-cyano-7-deazaguanine + ADP + phosphate + H2O + H(+). Its pathway is purine metabolism; 7-cyano-7-deazaguanine biosynthesis. In terms of biological role, catalyzes the ATP-dependent conversion of 7-carboxy-7-deazaguanine (CDG) to 7-cyano-7-deazaguanine (preQ(0)). This chain is 7-cyano-7-deazaguanine synthase, found in Sinorhizobium fredii (strain NBRC 101917 / NGR234).